The sequence spans 174 residues: Ribosome rescue factor SmrB (174 aa).

The 76-residue stretch at 96 to 171 folds into the Smr domain; the sequence is LDLHGMNQQQ…GDSAILVLLD (76 aa).

This sequence belongs to the SmrB family. In terms of assembly, associates with collided ribosomes, but not with correctly translating polysomes.

Functionally, acts as a ribosome collision sensor. Detects stalled/collided disomes (pairs of ribosomes where the leading ribosome is stalled and a second ribosome has collided with it) and endonucleolytically cleaves mRNA at the 5' boundary of the stalled ribosome. Stalled/collided disomes form a new interface (primarily via the 30S subunits) that binds SmrB. Cleaved mRNA becomes available for tmRNA ligation, leading to ribosomal subunit dissociation and rescue of stalled ribosomes. This Aeromonas hydrophila subsp. hydrophila (strain ATCC 7966 / DSM 30187 / BCRC 13018 / CCUG 14551 / JCM 1027 / KCTC 2358 / NCIMB 9240 / NCTC 8049) protein is Ribosome rescue factor SmrB.